The following is a 179-amino-acid chain: Large ribosomal subunit protein uL5 (179 aa).

Belongs to the universal ribosomal protein uL5 family. Part of the 50S ribosomal subunit; part of the 5S rRNA/L5/L18/L25 subcomplex. Contacts the 5S rRNA and the P site tRNA. Forms a bridge to the 30S subunit in the 70S ribosome.

This is one of the proteins that bind and probably mediate the attachment of the 5S RNA into the large ribosomal subunit, where it forms part of the central protuberance. In the 70S ribosome it contacts protein S13 of the 30S subunit (bridge B1b), connecting the 2 subunits; this bridge is implicated in subunit movement. Contacts the P site tRNA; the 5S rRNA and some of its associated proteins might help stabilize positioning of ribosome-bound tRNAs. This chain is Large ribosomal subunit protein uL5, found in Francisella tularensis subsp. novicida (strain U112).